The primary structure comprises 162 residues: B-box zinc finger protein 23 (162 aa).

Zn(2+)-binding residues include cysteine 5, cysteine 8, cysteine 28, histidine 33, cysteine 63, cysteine 66, cysteine 86, and histidine 91. Residues 5–47 form a B box-type 1; atypical zinc finger; that stretch reads CEVCEKAEAEVLCCSDEAVLCKPCDIKVHEANKLFQRHHRVAL. Residues 63 to 101 form a B box-type 2; atypical zinc finger; that stretch reads CDICQERKGYFFCLEDRAMLCNDCDEAIHTCNSHQRFLL. The interval 137 to 162 is disordered; it reads QYSSEETEAGNSGEIVHKNPSVILSP.

It localises to the nucleus. Functionally, probable transcription factor that may be involved in seedling photomorphogenesis. The chain is B-box zinc finger protein 23 from Arabidopsis thaliana (Mouse-ear cress).